A 308-amino-acid chain; its full sequence is 2-methylisocitrate lyase (308 aa).

Residue 54–56 (SGG) coordinates substrate. The Mg(2+) site is built by aspartate 94 and aspartate 96. Substrate-binding positions include 131-132 (CG), arginine 166, glutamate 196, 224-226 (NIT), arginine 255, and arginine 284.

It belongs to the isocitrate lyase/PEP mutase superfamily. Methylisocitrate lyase family. As to quaternary structure, homotetramer; dimer of dimers. Mg(2+) serves as cofactor.

The enzyme catalyses (2S,3R)-3-hydroxybutane-1,2,3-tricarboxylate = pyruvate + succinate. The protein operates within organic acid metabolism; propanoate degradation. Involved in the catabolism of short chain fatty acids (SCFA) via the 2-methylcitrate cycle I (propionate degradation route). Catalyzes the thermodynamically favored C-C bond cleavage reaction of (2R,3S)-2-methylisocitrate to yield pyruvate and succinate via an alpha-carboxy-carbanion intermediate. In Vibrio cholerae serotype O1 (strain ATCC 39315 / El Tor Inaba N16961), this protein is 2-methylisocitrate lyase.